A 732-amino-acid polypeptide reads, in one-letter code: Polyribonucleotide nucleotidyltransferase (732 aa).

Residues D503 and D509 each coordinate Mg(2+). The region spanning 570 to 629 (PRLTAIQVPVESIGLIIGKGGETIRSITEETGAEINIEDDGTVTIACSSNEGTKGAVEII) is the KH domain. The S1 motif domain occupies 639-713 (GTVYIGKVRD…GKTRFALSIK (75 aa)).

This sequence belongs to the polyribonucleotide nucleotidyltransferase family. It depends on Mg(2+) as a cofactor.

It is found in the cytoplasm. It carries out the reaction RNA(n+1) + phosphate = RNA(n) + a ribonucleoside 5'-diphosphate. Functionally, involved in mRNA degradation. Catalyzes the phosphorolysis of single-stranded polyribonucleotides processively in the 3'- to 5'-direction. This is Polyribonucleotide nucleotidyltransferase from Chlorobium phaeovibrioides (strain DSM 265 / 1930) (Prosthecochloris vibrioformis (strain DSM 265)).